The following is a 408-amino-acid chain: Indian hedgehog protein (408 aa).

The N-terminal stretch at 1–23 is a signal peptide; sequence MKPARLLLLLSGCALLLAPAVRC. Cys24 is lipidated: N-palmitoyl cysteine. Glu90, Glu91, Asp96, Thr126, Glu127, Asp130, and Asp132 together coordinate Ca(2+). 3 residues coordinate Zn(2+): His141, Asp148, and His183. Gly198 is lipidated: Cholesterol glycine ester.

This sequence belongs to the hedgehog family. In terms of assembly, multimer. As to quaternary structure, interacts with BOC and CDON. Interacts with PTCH1. Interacts with glypican GPC3. Cholesterylation is required for N-product targeting to lipid rafts and multimerization. Post-translationally, the C-terminal domain displays an autoproteolysis activity and a cholesterol transferase activity. Both activities result in the cleavage of the full-length protein and covalent attachment of a cholesterol moiety to the C-terminal of the newly generated N-product. The N-product is the active species in both local and long-range signaling, whereas the C-product is degraded in the endoplasmic reticulum. In terms of processing, N-palmitoylation by HHAT of N-product is required for indian hedgehog protein N-product multimerization and full activity. In terms of tissue distribution, expressed in developing midgut, lung and cartilage of developing long bones in the limb.

The protein resides in the cell membrane. Its subcellular location is the endoplasmic reticulum membrane. The protein localises to the golgi apparatus membrane. It is found in the secreted. It carries out the reaction glycyl-L-cysteinyl-[protein] + cholesterol + H(+) = [protein]-C-terminal glycyl cholesterol ester + N-terminal L-cysteinyl-[protein]. Its function is as follows. Plays a role in embryonic morphogenesis; it is involved in the regulation of endochondral skeleton formation, and the development of retinal pigment epithelium (RPE), photoreceptors and periocular tissues. Functionally, the C-terminal part of the indian hedgehog protein precursor displays an autoproteolysis and a cholesterol transferase activity. Both activities result in the cleavage of the full-length protein into two parts followed by the covalent attachment of a cholesterol moiety to the C-terminal of the newly generated N-product. Both activities occur in the endoplasmic reticulum. The dually lipidated indian hedgehog protein N-product is a morphogen which is essential for a variety of patterning events during development. Binds to the patched (PTCH1) receptor, which functions in association with smoothened (SMO), to activate the transcription of target genes. Plays a role in morphogenesis of the skeleton by coordinating growth and differentiation of the endochondral skeleton. Positively regulates PTHLH expression during endochondral bone formation preventing chondrocyte hypertrophy. In contrast, participates in normal chondrocyte proliferation in a PTHLH-independent pathway. This chain is Indian hedgehog protein, found in Gallus gallus (Chicken).